Here is a 590-residue protein sequence, read N- to C-terminus: Membrane protein insertase YidC (590 aa).

5 helical membrane passes run 5–25 (SVIG…FMKP), 368–388 (GLII…LSLA), 433–453 (LGGC…FYVF), 483–503 (LPLY…TVFF), and 519–539 (IMMW…PAGL).

This sequence belongs to the OXA1/ALB3/YidC family. Type 1 subfamily. In terms of assembly, interacts with the Sec translocase complex via SecD. Specifically interacts with transmembrane segments of nascent integral membrane proteins during membrane integration.

It is found in the cell inner membrane. Functionally, required for the insertion and/or proper folding and/or complex formation of integral membrane proteins into the membrane. Involved in integration of membrane proteins that insert both dependently and independently of the Sec translocase complex, as well as at least some lipoproteins. Aids folding of multispanning membrane proteins. The chain is Membrane protein insertase YidC from Chlorobaculum tepidum (strain ATCC 49652 / DSM 12025 / NBRC 103806 / TLS) (Chlorobium tepidum).